A 438-amino-acid polypeptide reads, in one-letter code: tRNA modification GTPase MnmE (438 aa).

(6S)-5-formyl-5,6,7,8-tetrahydrofolate contacts are provided by arginine 21, glutamate 79, and lysine 118. Residues 215–362 (GFSIVLIGAP…LEARIEQIVR (148 aa)) enclose the TrmE-type G domain. Asparagine 225 serves as a coordination point for K(+). GTP is bound by residues 225–230 (NAGKSS), 244–250 (TDIPGTT), and 269–272 (DTAG). Serine 229 provides a ligand contact to Mg(2+). K(+) is bound by residues threonine 244, isoleucine 246, and threonine 249. Threonine 250 contacts Mg(2+). Lysine 438 serves as a coordination point for (6S)-5-formyl-5,6,7,8-tetrahydrofolate.

This sequence belongs to the TRAFAC class TrmE-Era-EngA-EngB-Septin-like GTPase superfamily. TrmE GTPase family. Homodimer. Heterotetramer of two MnmE and two MnmG subunits. Requires K(+) as cofactor.

The protein localises to the cytoplasm. Exhibits a very high intrinsic GTPase hydrolysis rate. Involved in the addition of a carboxymethylaminomethyl (cmnm) group at the wobble position (U34) of certain tRNAs, forming tRNA-cmnm(5)s(2)U34. The sequence is that of tRNA modification GTPase MnmE from Maricaulis maris (strain MCS10) (Caulobacter maris).